The sequence spans 252 residues: Imidazole glycerol phosphate synthase subunit HisF (252 aa).

Catalysis depends on residues Asp13 and Asp132.

This sequence belongs to the HisA/HisF family. In terms of assembly, heterodimer of HisH and HisF.

The protein localises to the cytoplasm. It catalyses the reaction 5-[(5-phospho-1-deoxy-D-ribulos-1-ylimino)methylamino]-1-(5-phospho-beta-D-ribosyl)imidazole-4-carboxamide + L-glutamine = D-erythro-1-(imidazol-4-yl)glycerol 3-phosphate + 5-amino-1-(5-phospho-beta-D-ribosyl)imidazole-4-carboxamide + L-glutamate + H(+). It functions in the pathway amino-acid biosynthesis; L-histidine biosynthesis; L-histidine from 5-phospho-alpha-D-ribose 1-diphosphate: step 5/9. In terms of biological role, IGPS catalyzes the conversion of PRFAR and glutamine to IGP, AICAR and glutamate. The HisF subunit catalyzes the cyclization activity that produces IGP and AICAR from PRFAR using the ammonia provided by the HisH subunit. The chain is Imidazole glycerol phosphate synthase subunit HisF from Campylobacter curvus (strain 525.92).